The sequence spans 468 residues: Cysteine--tRNA ligase (468 aa).

Residue Cys-28 coordinates Zn(2+). Residues 30 to 40 carry the 'HIGH' region motif; it reads PTVYNYIHIGN. Residues Cys-212, His-237, and Glu-241 each contribute to the Zn(2+) site. The 'KMSKS' region motif lies at 271 to 275; sequence KMSKS. Lys-274 contacts ATP.

Belongs to the class-I aminoacyl-tRNA synthetase family. In terms of assembly, monomer. Zn(2+) is required as a cofactor.

It localises to the cytoplasm. The enzyme catalyses tRNA(Cys) + L-cysteine + ATP = L-cysteinyl-tRNA(Cys) + AMP + diphosphate. The sequence is that of Cysteine--tRNA ligase from Latilactobacillus sakei subsp. sakei (strain 23K) (Lactobacillus sakei subsp. sakei).